We begin with the raw amino-acid sequence, 469 residues long: Solute carrier family 52, riboflavin transporter, member 3 (469 aa).

The Cytoplasmic segment spans residues 1–2 (MA). Residues 3 to 23 (FLMHLLVCVFGMGSWVTINGL) form a helical membrane-spanning segment. The Extracellular segment spans residues 24–43 (WVELPLLVMELPEGWYLPSY). A helical membrane pass occupies residues 44 to 64 (LTVVIQLANIGPLLVTLLHHF). Topologically, residues 65–71 (RPSCLSE) are cytoplasmic. The chain crosses the membrane as a helical span at residues 72 to 92 (VPIIFTLLGVGTVTCIIFAFL). Residues 93 to 97 (WNMTS) are Extracellular-facing. The N-linked (GlcNAc...) asparagine glycan is linked to Asn94. The helical transmembrane segment at 98 to 118 (WVLDGHHSIAFLVLTFFLALV) threads the bilayer. The Cytoplasmic segment spans residues 119–137 (DCTSSVTFLPFMSRLPTYY). A helical membrane pass occupies residues 138–158 (LTTFFVGEGLSGLLPALVALA). The Extracellular segment spans residues 159–220 (QGSGLTTCVN…SRYLPAHFSP (62 aa)). An N-linked (GlcNAc...) asparagine glycan is attached at Asn168. A helical membrane pass occupies residues 221–241 (LVFFLLLSIMMACCLVAFFVL). Residues 242–292 (QRQPRCWEASVEDLLNDQVTLHSIRPREENDLGPAGTVDSSQGQGYLEEKA) lie on the Cytoplasmic side of the membrane. Ser251 bears the Phosphoserine mark. A helical transmembrane segment spans residues 293-313 (APCCPAHLAFIYTLVAFVNAL). At 314 to 335 (TNGMLPSVQTYSCLSYGPVAYH) the chain is on the extracellular side. A helical transmembrane segment spans residues 336-356 (LAATLSIVANPLASLVSMFLP). Over 357–359 (NRS) the chain is Cytoplasmic. A helical membrane pass occupies residues 360–380 (LLFLGVLSVLGTCFGGYNMAM). The Extracellular segment spans residues 381–396 (AVMSPCPLLQGHWGGE). Cys386 and Cys463 form a disulfide bridge. The chain crosses the membrane as a helical span at residues 397-417 (VLIVASWVLFSGCLSYVKVML). At 418–427 (GVVLRDLSRS) the chain is on the cytoplasmic side. A helical transmembrane segment spans residues 428-448 (ALLWCGAAVQLGSLLGALLMF). Over 449 to 469 (PLVNVLRLFSSADFCNLHCPA) the chain is Extracellular.

This sequence belongs to the riboflavin transporter family. As to expression, predominantly expressed in testis. Highly expressed in small intestine and prostate.

It localises to the apical cell membrane. It is found in the cell membrane. The protein resides in the nucleus membrane. Its subcellular location is the cytoplasm. It catalyses the reaction riboflavin(in) = riboflavin(out). With respect to regulation, activity is strongly inhibited by riboflavin analogs, such as lumiflavin, flavin mononucleotide (FMN), flavin adenine dinucleotide (FAD), by methylene blue, and to a lesser extent by amiloride. Riboflavin transport is Na(+)-independent at low pH but significantly reduced by Na(+) depletion under neutral pH conditions. Plasma membrane transporter mediating the uptake by cells of the water soluble vitamin B2/riboflavin that plays a key role in biochemical oxidation-reduction reactions of the carbohydrate, lipid, and amino acid metabolism. Humans are unable to synthesize vitamin B2/riboflavin and must obtain it via intestinal absorption. The chain is Solute carrier family 52, riboflavin transporter, member 3 (SLC52A3) from Homo sapiens (Human).